The sequence spans 237 residues: Protein GrpE (237 aa).

Disordered stretches follow at residues 24–56 (LILE…KQLQ) and 204–237 (SAGS…PQPS).

Belongs to the GrpE family. As to quaternary structure, homodimer.

It localises to the cytoplasm. Participates actively in the response to hyperosmotic and heat shock by preventing the aggregation of stress-denatured proteins, in association with DnaK and GrpE. It is the nucleotide exchange factor for DnaK and may function as a thermosensor. Unfolded proteins bind initially to DnaJ; upon interaction with the DnaJ-bound protein, DnaK hydrolyzes its bound ATP, resulting in the formation of a stable complex. GrpE releases ADP from DnaK; ATP binding to DnaK triggers the release of the substrate protein, thus completing the reaction cycle. Several rounds of ATP-dependent interactions between DnaJ, DnaK and GrpE are required for fully efficient folding. The polypeptide is Protein GrpE (Synechococcus sp. (strain JA-2-3B'a(2-13)) (Cyanobacteria bacterium Yellowstone B-Prime)).